Consider the following 1013-residue polypeptide: EF-hand calcium-binding domain-containing protein 6 (1013 aa).

EF-hand domains lie at 20-55 (KNIK…FCLK), 145-180 (KSYE…FIYQ), 251-286 (DRSA…VAIK), 287-322 (LSDS…NCRM), and 352-387 (RNLQ…FCPF). The tract at residues 441 to 460 (QKDEQQQPDLSERTKPTEDK) is disordered. 6 EF-hand domains span residues 482 to 517 (QQDP…TGMP), 589 to 624 (ESFR…LLLN), 695 to 730 (NRWS…FDIP), 731 to 766 (LTPR…NYSP), 812 to 847 (DLHQ…CGCS), and 917 to 952 (SSQL…FCYK). Positions 602, 604, 606, and 613 each coordinate Ca(2+). T732 carries the phosphothreonine modification.

As to quaternary structure, microtubule inner protein component of sperm flagellar doublet microtubules. Binds PARK7. Part of a ternary complex containing PARK7, EFCAB6/DJBP and AR.

The protein localises to the nucleus. It localises to the cytoplasm. The protein resides in the cytoskeleton. It is found in the flagellum axoneme. Functionally, negatively regulates the androgen receptor by recruiting histone deacetylase complex, and protein DJ-1 antagonizes this inhibition by abrogation of this complex. Microtubule inner protein (MIP) part of the dynein-decorated doublet microtubules (DMTs) in cilia axoneme, which is required for motile cilia beating. The polypeptide is EF-hand calcium-binding domain-containing protein 6 (EFCAB6) (Pongo abelii (Sumatran orangutan)).